A 437-amino-acid chain; its full sequence is ATP-dependent protease ATPase subunit HslU (437 aa).

Residues Val-18, 60-65, Asp-249, Glu-315, and Arg-387 contribute to the ATP site; that span reads GVGKTE.

Belongs to the ClpX chaperone family. HslU subfamily. In terms of assembly, a double ring-shaped homohexamer of HslV is capped on each side by a ring-shaped HslU homohexamer. The assembly of the HslU/HslV complex is dependent on binding of ATP.

It localises to the cytoplasm. ATPase subunit of a proteasome-like degradation complex; this subunit has chaperone activity. The binding of ATP and its subsequent hydrolysis by HslU are essential for unfolding of protein substrates subsequently hydrolyzed by HslV. HslU recognizes the N-terminal part of its protein substrates and unfolds these before they are guided to HslV for hydrolysis. The polypeptide is ATP-dependent protease ATPase subunit HslU (Rhodospirillum centenum (strain ATCC 51521 / SW)).